The chain runs to 379 residues: Cytochrome b (379 aa).

4 helical membrane passes run 33–53 (FGSLLGMCLVIQILTGLFLAM), 77–98 (WLIRYLHANGASMFFICLFIHV), 113–133 (WNIGIILLLTTMATAFVGYVL), and 178–198 (FFAFHFILPFIIAAFALVHLL). Heme b is bound by residues His83 and His97. The heme b site is built by His182 and His196. Position 201 (His201) interacts with a ubiquinone. 4 helical membrane-spanning segments follow: residues 226-246 (IKDLLGIFLLLLILMALALFF), 288-308 (LGGVLALILSILILAAFPLLN), 320-340 (VTQTIYWIFIANLLVLTWIGG), and 347-367 (FTMIGQIASVTYFTIITILIP).

It belongs to the cytochrome b family. As to quaternary structure, the cytochrome bc1 complex contains 11 subunits: 3 respiratory subunits (MT-CYB, CYC1 and UQCRFS1), 2 core proteins (UQCRC1 and UQCRC2) and 6 low-molecular weight proteins (UQCRH/QCR6, UQCRB/QCR7, UQCRQ/QCR8, UQCR10/QCR9, UQCR11/QCR10 and a cleavage product of UQCRFS1). This cytochrome bc1 complex then forms a dimer. Requires heme b as cofactor.

It localises to the mitochondrion inner membrane. In terms of biological role, component of the ubiquinol-cytochrome c reductase complex (complex III or cytochrome b-c1 complex) that is part of the mitochondrial respiratory chain. The b-c1 complex mediates electron transfer from ubiquinol to cytochrome c. Contributes to the generation of a proton gradient across the mitochondrial membrane that is then used for ATP synthesis. The chain is Cytochrome b (MT-CYB) from Akodon philipmyersi (Myers' grass mouse).